The following is a 201-amino-acid chain: MDDADKSCSPSLDHSDINDPMIVAVESLDTSKKRKLHAEESDLLPLPKHFCSEHQASLVNSSCPSSVIDYAECSYAMENTKTSDEASSSASFTGPSLYMFKDSIYSTGSSSSGYAATSSIEQCFSKVDHKTQEDTQDFTHMEFIYHDSEFAVEDLQEVLNPVESYILSSARWSVSNQDSKEATTKPTIDQEFEQYFSTLMM.

The Nuclear localization sequence (NLS) signature appears at lysine 32 to lysine 35. Residues leucine 43 to leucine 46 carry the Nuclear export sequence (NES) motif.

It belongs to the FHY1 protein family. Homodimer and heterodimer with FHY1. Interacts with PHYA, especially upon far-red (FR) light illumination. Binds to LAF1 and HFR1. Inactivated by rapid reversible PHYA-mediated phosphorylation.

The protein resides in the nucleus. Its subcellular location is the cytoplasm. Its function is as follows. Can activate transcription. Essential for light-regulated PHYA nuclear accumulation and subsequent PHYA phototropic signaling processes. PHYA-specific signal transducer in response to continuous FR lights. Mediates the association of PHYA with HFR1 and LAF1 in the nucleus in response to FR conditions. Contributes to inhibition of hypocotyl elongation in continuous blue light (B). This chain is Protein FAR-RED-ELONGATED HYPOCOTYL 1-LIKE, found in Arabidopsis thaliana (Mouse-ear cress).